Consider the following 156-residue polypeptide: ATP synthase subunit b (156 aa).

The helical transmembrane segment at 7-27 (FFAQMVVFFILWWVVAKFIWP) threads the bilayer.

Belongs to the ATPase B chain family. F-type ATPases have 2 components, F(1) - the catalytic core - and F(0) - the membrane proton channel. F(1) has five subunits: alpha(3), beta(3), gamma(1), delta(1), epsilon(1). F(0) has three main subunits: a(1), b(2) and c(10-14). The alpha and beta chains form an alternating ring which encloses part of the gamma chain. F(1) is attached to F(0) by a central stalk formed by the gamma and epsilon chains, while a peripheral stalk is formed by the delta and b chains.

Its subcellular location is the cell inner membrane. Its function is as follows. F(1)F(0) ATP synthase produces ATP from ADP in the presence of a proton or sodium gradient. F-type ATPases consist of two structural domains, F(1) containing the extramembraneous catalytic core and F(0) containing the membrane proton channel, linked together by a central stalk and a peripheral stalk. During catalysis, ATP synthesis in the catalytic domain of F(1) is coupled via a rotary mechanism of the central stalk subunits to proton translocation. In terms of biological role, component of the F(0) channel, it forms part of the peripheral stalk, linking F(1) to F(0). This is ATP synthase subunit b from Cupriavidus taiwanensis (strain DSM 17343 / BCRC 17206 / CCUG 44338 / CIP 107171 / LMG 19424 / R1) (Ralstonia taiwanensis (strain LMG 19424)).